The following is a 411-amino-acid chain: Corticotropin-releasing factor receptor 2 (411 aa).

A signal peptide (not cleaved) is located at residues 1 to 19; it reads MDAALLLSLLEANCSLALA. The Extracellular portion of the chain corresponds to 1-108; it reads MDAALLLSLL…EPILDDKQRK (108 aa). Residues N13, N41, N74, N86, and N94 are each glycosylated (N-linked (GlcNAc...) asparagine). Disulfide bonds link C14-C50, C40-C83, and C64-C98. A helical membrane pass occupies residues 109–139; the sequence is YDLHYRIALIVNYLGHCVSVVALVAAFLLFL. The Cytoplasmic portion of the chain corresponds to 140–146; sequence VLRSIRC. The helical transmembrane segment at 147–171 threads the bilayer; the sequence is LRNVIHWNLITTFILRNIAWFLLQL. The Extracellular portion of the chain corresponds to 172–185; sequence IDHEVHEGNEVWCR. A disulfide bridge links C184 with C254. The helical transmembrane segment at 186 to 214 threads the bilayer; the sequence is CITTIFNYFVVTNFFWMFVEGCYLHTAIV. The Cytoplasmic segment spans residues 215–221; it reads MTYSTEH. The chain crosses the membrane as a helical span at residues 222-249; that stretch reads LRKWLFLFIGWCIPCPIIIAWAVGKLYY. Residues 250 to 265 are Extracellular-facing; that stretch reads ENEQCWFGKEAGDLVD. A helical membrane pass occupies residues 266 to 291; that stretch reads YIYQGPVMLVLLINFVFLFNIVRILM. At 292–302 the chain is on the cytoplasmic side; it reads TKLRASTTSET. Residues 303–327 traverse the membrane as a helical segment; it reads IQYRKAVKATLVLLPLLGITYMLFF. The Extracellular portion of the chain corresponds to 328-334; that stretch reads VNPGEDD. Residues 335–364 form a helical membrane-spanning segment; it reads LSQIVFIYFNSFLQSFQGFFVSVFYCFFNG. At 365–411 the chain is on the cytoplasmic side; it reads EVRAALRKRWHRWQDHHALRVPVARAMSIPTSPTRISFHSIKQTAAV.

This sequence belongs to the G-protein coupled receptor 2 family. As to quaternary structure, monomer. Interacts with CRF, UCN, UCN2 and UCN3. Post-translationally, a N-glycosylation site within the signal peptide impedes its proper cleavage and function. As to expression, highly expressed in the heart. Also expressed in lungs, skeletal muscle, gastrointestinal tract, epididymis, and brain.

Its subcellular location is the cell membrane. Its function is as follows. G-protein coupled receptor for CRH (corticotropin-releasing factor), UCN (urocortin), UCN2 and UCN3. Has high affinity for UCN. Ligand binding causes a conformation change that triggers signaling via guanine nucleotide-binding proteins (G proteins) and down-stream effectors, such as adenylate cyclase. Promotes the activation of adenylate cyclase, leading to increased intracellular cAMP levels. The sequence is that of Corticotropin-releasing factor receptor 2 (Crhr2) from Mus musculus (Mouse).